A 458-amino-acid chain; its full sequence is Putative U-box domain-containing protein 46 (458 aa).

The U-box domain maps to 71-144 (EVPKEFICTL…TQWCLVNKYD (74 aa)). ARM repeat units lie at residues 241 to 281 (ESNK…SLSA) and 283 to 322 (DSNKIIIGNSEAVKALIDLIEEGDLLATKEATSTVFNLCI).

It catalyses the reaction S-ubiquitinyl-[E2 ubiquitin-conjugating enzyme]-L-cysteine + [acceptor protein]-L-lysine = [E2 ubiquitin-conjugating enzyme]-L-cysteine + N(6)-ubiquitinyl-[acceptor protein]-L-lysine.. The protein operates within protein modification; protein ubiquitination. Its function is as follows. Functions as an E3 ubiquitin ligase. This is Putative U-box domain-containing protein 46 (PUB46) from Arabidopsis thaliana (Mouse-ear cress).